A 313-amino-acid chain; its full sequence is Ribosomal protein L11 methyltransferase (313 aa).

S-adenosyl-L-methionine-binding residues include Thr-161, Gly-182, Asp-204, and Asn-246.

The protein belongs to the methyltransferase superfamily. PrmA family.

The protein resides in the cytoplasm. The enzyme catalyses L-lysyl-[protein] + 3 S-adenosyl-L-methionine = N(6),N(6),N(6)-trimethyl-L-lysyl-[protein] + 3 S-adenosyl-L-homocysteine + 3 H(+). Methylates ribosomal protein L11. This chain is Ribosomal protein L11 methyltransferase, found in Acetivibrio thermocellus (strain ATCC 27405 / DSM 1237 / JCM 9322 / NBRC 103400 / NCIMB 10682 / NRRL B-4536 / VPI 7372) (Clostridium thermocellum).